The following is a 326-amino-acid chain: tRNA U34 carboxymethyltransferase (326 aa).

Residues lysine 95, tryptophan 109, lysine 114, glycine 134, 184-185, tyrosine 204, and arginine 319 contribute to the carboxy-S-adenosyl-L-methionine site; that span reads VE.

It belongs to the class I-like SAM-binding methyltransferase superfamily. CmoB family.

It catalyses the reaction carboxy-S-adenosyl-L-methionine + 5-hydroxyuridine(34) in tRNA = 5-carboxymethoxyuridine(34) in tRNA + S-adenosyl-L-homocysteine + H(+). Catalyzes carboxymethyl transfer from carboxy-S-adenosyl-L-methionine (Cx-SAM) to 5-hydroxyuridine (ho5U) to form 5-carboxymethoxyuridine (cmo5U) at position 34 in tRNAs. The chain is tRNA U34 carboxymethyltransferase from Trichodesmium erythraeum (strain IMS101).